The following is a 975-amino-acid chain: FHF complex subunit HOOK-interacting protein 1B (975 aa).

Residues 465 to 496 (APSPPRPEHASWARGPGSPSVDSSSVVTVPRP) are disordered. Ser467 carries the post-translational modification Phosphoserine. Over residues 482–496 (SPSVDSSSVVTVPRP) the composition is skewed to low complexity. Ser510, Ser523, Ser529, and Ser533 each carry phosphoserine. Disordered stretches follow at residues 511-548 (LGGSESPGPVPRSPGLTASPTSSPSRRPSPAEEPGELE), 573-621 (SAPY…GLAV), and 690-717 (SNGGAGSEPPLEPPLPPEEEEAYESFTC). Residues 527-538 (TASPTSSPSRRP) are compositionally biased toward low complexity. The span at 597-608 (LLPEEDRDNVRE) shows a compositional bias: basic and acidic residues. A Phosphoserine modification is found at Ser863. Thr892 carries the phosphothreonine modification. Ser900 is modified (phosphoserine).

This sequence belongs to the FHIP family. As to quaternary structure, component of the FTS/Hook/FHIP complex (FHF complex), composed of AKTIP/FTS, FHIP1B, and one or more members of the Hook family of proteins HOOK1, HOOK2, and HOOK3. The FHF complex associates with the homotypic vesicular sorting complex (the HOPS complex).

In terms of biological role, component of the FTS/Hook/FHIP complex (FHF complex). The FHF complex may function to promote vesicle trafficking and/or fusion via the homotypic vesicular protein sorting complex (the HOPS complex). FHF complex promotes the distribution of AP-4 complex to the perinuclear area of the cell. The protein is FHF complex subunit HOOK-interacting protein 1B of Mus musculus (Mouse).